Here is a 233-residue protein sequence, read N- to C-terminus: NAD(P)H-hydrate epimerase (233 aa).

Positions 10 to 217 (AINVDLELFN…ALQRKYELNL (208 aa)) constitute a YjeF N-terminal domain. 60–64 (NNGGD) contacts (6S)-NADPHX. K(+) contacts are provided by asparagine 61 and aspartate 125. (6S)-NADPHX-binding positions include 129–135 (GFSFKPP) and aspartate 158. Position 161 (serine 161) interacts with K(+).

This sequence belongs to the NnrE/AIBP family. K(+) serves as cofactor.

It carries out the reaction (6R)-NADHX = (6S)-NADHX. The enzyme catalyses (6R)-NADPHX = (6S)-NADPHX. Functionally, catalyzes the epimerization of the S- and R-forms of NAD(P)HX, a damaged form of NAD(P)H that is a result of enzymatic or heat-dependent hydration. This is a prerequisite for the S-specific NAD(P)H-hydrate dehydratase to allow the repair of both epimers of NAD(P)HX. This is NAD(P)H-hydrate epimerase from Drosophila grimshawi (Hawaiian fruit fly).